Consider the following 500-residue polypeptide: Histidinol dehydrogenase homolog 1 (500 aa).

The disordered stretch occupies residues 1-25 (MPPAGGIFHRPPTTRKSRRLTPRSA). The segment covering 12-21 (PTTRKSRRLT) has biased composition (basic residues). Gln313 and His316 together coordinate Zn(2+). Active-site proton acceptor residues include Glu381 and His382. The Zn(2+) site is built by Asp415 and His475.

The protein belongs to the histidinol dehydrogenase family. Zn(2+) serves as cofactor.

This is Histidinol dehydrogenase homolog 1 from Mesorhizobium japonicum (strain LMG 29417 / CECT 9101 / MAFF 303099) (Mesorhizobium loti (strain MAFF 303099)).